The primary structure comprises 425 residues: 2-methylserine hydroxymethyltransferase (425 aa).

Residues leucine 126 and glycine 130–leucine 132 contribute to the (6S)-5,6,7,8-tetrahydrofolate site. At lysine 235 the chain carries N6-(pyridoxal phosphate)lysine.

The protein belongs to the SHMT family. As to quaternary structure, homodimer. It depends on pyridoxal 5'-phosphate as a cofactor.

It is found in the cytoplasm. It carries out the reaction (6R)-5,10-methylene-5,6,7,8-tetrahydrofolate + D-alanine + H2O = 2-methylserine + (6S)-5,6,7,8-tetrahydrofolate. Its pathway is one-carbon metabolism; tetrahydrofolate interconversion. Catalyzes the reversible interconversion of alpha-methyl-L-serine to D-alanine with tetrahydrofolate (THF) serving as the one-carbon carrier. Cannot use alpha-methyl-D-serine, L-serine, D-serine or L-alanine. This is 2-methylserine hydroxymethyltransferase from Aminobacter sp.